A 314-amino-acid chain; its full sequence is tRNA(Ile)-lysidine synthase, chloroplastic (314 aa).

31–36 is an ATP binding site; the sequence is SGGQDS.

It belongs to the tRNA(Ile)-lysidine synthase family.

The protein resides in the plastid. The protein localises to the chloroplast. The catalysed reaction is cytidine(34) in tRNA(Ile2) + L-lysine + ATP = lysidine(34) in tRNA(Ile2) + AMP + diphosphate + H(+). Ligates lysine onto the cytidine present at position 34 of the AUA codon-specific tRNA(Ile) that contains the anticodon CAU, in an ATP-dependent manner. Cytidine is converted to lysidine, thus changing the amino acid specificity of the tRNA from methionine to isoleucine. This is tRNA(Ile)-lysidine synthase, chloroplastic from Cyanidium caldarium (Red alga).